The chain runs to 347 residues: Beta carbonic anhydrase 1, chloroplastic (347 aa).

Residues methionine 1–alanine 113 constitute a chloroplast transit peptide. Residue alanine 114 is modified to N-acetylalanine. Phosphoserine is present on serine 175. Residue tyrosine 203 is modified to Phosphotyrosine. Position 266 is a phosphoserine (serine 266). Residue cysteine 280 is modified to S-nitrosocysteine.

This sequence belongs to the beta-class carbonic anhydrase family. Homohexamer. S-nitrosylation at Cys-280 is up-regulated during nitrosative burst and suppresses both binding of salicylic acid and carbonic anhydrase activity. S-nitrosylated in response to an avirulent but not to a virulent bacterial strain. As to expression, strongly expressed in aerial tissues including leaves, stems, flowers and siliques. Accumulates in both guard cells and mesophyll cells.

The protein localises to the plastid. It localises to the chloroplast stroma. The protein resides in the cell membrane. The catalysed reaction is hydrogencarbonate + H(+) = CO2 + H2O. Functionally, reversible hydration of carbon dioxide. Required for photosynthesis in cotyledons. Binds salicylic acid. Together with BCA4, involved in the CO(2) signaling pathway which controls gas-exchange between plants and the atmosphere by modulating stomatal development and movements. Promotes water use efficiency. This Arabidopsis thaliana (Mouse-ear cress) protein is Beta carbonic anhydrase 1, chloroplastic.